A 366-amino-acid chain; its full sequence is Beta sliding clamp (366 aa).

The interval 1 to 125 (MKFTVEREHL…FPNLDDWQSE (125 aa)) is i. The tract at residues 126–253 (VEFTLPQATM…YRRVLPKNPD (128 aa)) is II. Residues 254–366 (KHLEAGCDLL…AAYVVMPMRL (113 aa)) are III.

Belongs to the beta sliding clamp family. As to quaternary structure, forms a ring-shaped head-to-tail homodimer around DNA which binds and tethers DNA polymerases and other proteins to the DNA. The DNA replisome complex has a single clamp-loading complex (3 tau and 1 each of delta, delta', psi and chi subunits) which binds 3 Pol III cores (1 core on the leading strand and 2 on the lagging strand) each with a beta sliding clamp dimer. Additional proteins in the replisome are other copies of gamma, psi and chi, Ssb, DNA helicase and RNA primase.

It is found in the cytoplasm. Its function is as follows. Confers DNA tethering and processivity to DNA polymerases and other proteins. Acts as a clamp, forming a ring around DNA (a reaction catalyzed by the clamp-loading complex) which diffuses in an ATP-independent manner freely and bidirectionally along dsDNA. Initially characterized for its ability to contact the catalytic subunit of DNA polymerase III (Pol III), a complex, multichain enzyme responsible for most of the replicative synthesis in bacteria; Pol III exhibits 3'-5' exonuclease proofreading activity. The beta chain is required for initiation of replication as well as for processivity of DNA replication. The protein is Beta sliding clamp (dnaN) of Escherichia coli O157:H7.